A 465-amino-acid polypeptide reads, in one-letter code: UDP-glycosyltransferase TURAN (465 aa).

At Met1 to Tyr75 the chain is on the cytoplasmic side. Residues Pro76–Val96 traverse the membrane as a helical segment. The Lumenal portion of the chain corresponds to Lys97–Ser465. Asn238 carries an N-linked (GlcNAc...) asparagine glycan.

It belongs to the glycosyltransferase group 1 family. Glycosyltransferase 33 subfamily.

It is found in the endoplasmic reticulum membrane. The protein operates within protein modification; protein glycosylation. Required for pollen tube (PT) growth and integrity by affecting the stability of the pollen-specific ANX1 and ANX2 proteins. Involved in protein N-glycosylation in the endoplasmic reticulum (ER), especially in the female gametophyte. Mediates PT reception in synergids through protein glycosylation. The polypeptide is UDP-glycosyltransferase TURAN (Arabidopsis thaliana (Mouse-ear cress)).